Reading from the N-terminus, the 1149-residue chain is Beta-alanine-activating enzyme (1149 aa).

Residues 178-186 (TSGTTGLPK), Asp-408, Arg-422, and Lys-543 contribute to the ATP site. Residues 570 to 646 (ASVRLKLQNL…DLLSHIMTET (77 aa)) enclose the Carrier domain. Ser-605 bears the O-(pantetheine 4'-phosphoryl)serine mark. Residues 653–683 (PSKKRTADYSDSEASGKRQHKEMTTSSDTES) form a disordered region.

It belongs to the ATP-dependent AMP-binding enzyme family.

In terms of biological role, covalently binds beta-alanine in an ATP-dependent manner to form a thioester bond with its phosphopantetheine group and transfers it to an, as yet, unknown acceptor. May be required for a post-translational protein modification or for post-transcriptional modification of an RNA. The chain is Beta-alanine-activating enzyme (aasdh) from Danio rerio (Zebrafish).